The primary structure comprises 138 residues: Flagellar assembly factor FliW (138 aa).

It belongs to the FliW family. In terms of assembly, interacts with translational regulator CsrA and flagellin(s).

It localises to the cytoplasm. Acts as an anti-CsrA protein, binds CsrA and prevents it from repressing translation of its target genes, one of which is flagellin. Binds to flagellin and participates in the assembly of the flagellum. This is Flagellar assembly factor FliW from Symbiobacterium thermophilum (strain DSM 24528 / JCM 14929 / IAM 14863 / T).